The chain runs to 524 residues: MVPQALLLVPILGFSSCFGKFPIYTIPDTLGPWSPIDIHHLSCPNNLVVEDEGCTNLSGFSYMELKVGYISAIKVNGFTCTGVVTEAETYTNFVGYVTTTFKRKHFRPTPDACRAAYNWKMAGDPRYEESLHSPYPDYHWLRTVKTTKESLVIISPSVADLDPYDNSLHSRVFPSGKCSGITVSSVYCSTNHDYTVWMPESLRLGTSCDIFTNSRGKRASKGSKTCGFVDERGLYKSLKGACKLKLCGVLGLRLMDGTWVAMQTSNETKWCPPDQLVNLHDLRSDEIEHLVIEELVKKREECLDALESIITTKSVSFRRLSYLRKLVPGFGKAYTIFNKTLMEAEAHYKSVRTWNEIIPSKGCLRVGGRCHPHVNGVFFNGIILGPDGHVLIPEMQSSLLQQHIELLESSVIPLMHPLADPFTVFKDGDETEDFIEVHLPDVHEQVSGVDLGLPNWGEYVLLSAGTLIALMLIIFLMTCCRKVDRPESTQRSLRGTGRNVSVTSQSGKFIPSWESYKSGGETGL.

A signal peptide spans 1-19 (MVPQALLLVPILGFSSCFG). Residues 20-459 (KFPIYTIPDT…DLGLPNWGEY (440 aa)) are Virion surface-facing. 6 disulfides stabilise this stretch: cysteine 43/cysteine 302, cysteine 54/cysteine 226, cysteine 80/cysteine 113, cysteine 178/cysteine 188, cysteine 208/cysteine 247, and cysteine 242/cysteine 271. N-linked (GlcNAc...) asparagine; by host glycosylation occurs at asparagine 56. 2 N-linked (GlcNAc...) asparagine; by host glycosylation sites follow: asparagine 266 and asparagine 338. Cysteine 363 and cysteine 370 are joined by a disulfide. The helical transmembrane segment at 460–480 (VLLSAGTLIALMLIIFLMTCC) threads the bilayer. Cysteine 480 carries the S-palmitoyl cysteine; by host lipid modification. At 481-524 (RKVDRPESTQRSLRGTGRNVSVTSQSGKFIPSWESYKSGGETGL) the chain is on the intravirion side.

It belongs to the lyssavirus glycoprotein family. In terms of assembly, homotrimer. Interacts with matrix protein. Interacts with host TRFC. Interacts with host BST2; this interaction inhibits viral budding by tethering new virions to the cell surface. Interacts with ITGB1. Interacts with host GRM2. Post-translationally, glycosylated and palmitoylated by host. Glycosylation is crucial for glycoprotein export at the cell surface.

It is found in the virion membrane. Functionally, attaches the virus to host cellular receptor, inducing endocytosis of the virion by using different host proteins including TFRC, GRM2 and ITGB1. In the endosome, the acidic pH induces conformational changes in the glycoprotein trimer, which trigger fusion between virus and cell membrane. There is convincing in vitro evidence that the muscular form of the nicotinic acetylcholine receptor (nAChR), the neuronal cell adhesion molecule (NCAM), and the p75 neurotrophin receptor (p75NTR) bind glycoprotein and thereby facilitate rabies virus entry into cells. This is Glycoprotein (G) from Rabies virus (strain Nishigahara RCEH) (RABV).